We begin with the raw amino-acid sequence, 645 residues long: ATP-dependent zinc metalloprotease FtsH (645 aa).

Residues 1-8 lie on the Cytoplasmic side of the membrane; it reads MDFNREHK. Residues 9-29 form a helical membrane-spanning segment; sequence INFLYVLAAMVGVLLIQSLVS. Over 30 to 105 the chain is Periplasmic; the sequence is QPDHIRTIPY…FSGEPEPGPW (76 aa). Residues 106-126 traverse the membrane as a helical segment; the sequence is PTILGWLMPIVGFALVWMFLI. The Cytoplasmic segment spans residues 127 to 645; it reads RPMSMGPGMD…ALTVEGGEAQ (519 aa). ATP is bound at residue 199–206; sequence GPPGTGKT. Histidine 423 is a binding site for Zn(2+). Glutamate 424 is a catalytic residue. The Zn(2+) site is built by histidine 427 and aspartate 500. Positions 612–645 are disordered; that stretch reads SASVLRDGGDGAADAGQDRSGEHRALTVEGGEAQ. Residues 627-637 are compositionally biased toward basic and acidic residues; sequence GQDRSGEHRAL.

The protein in the central section; belongs to the AAA ATPase family. In the C-terminal section; belongs to the peptidase M41 family. Homohexamer. It depends on Zn(2+) as a cofactor.

The protein localises to the cell inner membrane. Acts as a processive, ATP-dependent zinc metallopeptidase for both cytoplasmic and membrane proteins. Plays a role in the quality control of integral membrane proteins. This Paraburkholderia phymatum (strain DSM 17167 / CIP 108236 / LMG 21445 / STM815) (Burkholderia phymatum) protein is ATP-dependent zinc metalloprotease FtsH.